Reading from the N-terminus, the 253-residue chain is Imidazole glycerol phosphate synthase subunit HisF (253 aa).

Active-site residues include D11 and D130.

Belongs to the HisA/HisF family. In terms of assembly, heterodimer of HisH and HisF.

Its subcellular location is the cytoplasm. It catalyses the reaction 5-[(5-phospho-1-deoxy-D-ribulos-1-ylimino)methylamino]-1-(5-phospho-beta-D-ribosyl)imidazole-4-carboxamide + L-glutamine = D-erythro-1-(imidazol-4-yl)glycerol 3-phosphate + 5-amino-1-(5-phospho-beta-D-ribosyl)imidazole-4-carboxamide + L-glutamate + H(+). Its pathway is amino-acid biosynthesis; L-histidine biosynthesis; L-histidine from 5-phospho-alpha-D-ribose 1-diphosphate: step 5/9. In terms of biological role, IGPS catalyzes the conversion of PRFAR and glutamine to IGP, AICAR and glutamate. The HisF subunit catalyzes the cyclization activity that produces IGP and AICAR from PRFAR using the ammonia provided by the HisH subunit. The sequence is that of Imidazole glycerol phosphate synthase subunit HisF from Cereibacter sphaeroides (strain ATCC 17029 / ATH 2.4.9) (Rhodobacter sphaeroides).